Reading from the N-terminus, the 285-residue chain is Ubiquinone biosynthesis protein COQ4, mitochondrial (285 aa).

The N-terminal 11 residues, Met-1–Thr-11, are a transit peptide targeting the mitochondrion. Zn(2+) contacts are provided by His-166, Asp-167, His-170, and Glu-182.

Belongs to the COQ4 family. Component of a multi-subunit COQ enzyme complex, composed of at least COQ3, COQ4, COQ5, COQ6, COQ7 and COQ9. It depends on Zn(2+) as a cofactor.

Its subcellular location is the mitochondrion inner membrane. It catalyses the reaction a 4-hydroxy-3-methoxy-5-(all-trans-polyprenyl)benzoate + H(+) = a 2-methoxy-6-(all-trans-polyprenyl)phenol + CO2. The protein operates within cofactor biosynthesis; ubiquinone biosynthesis. Its function is as follows. Lyase that catalyzes the C1-decarboxylation of 4-hydroxy-3-methoxy-5-(all-trans-polyprenyl)benzoic acid into 2-methoxy-6-(all-trans-polyprenyl)phenol during ubiquinone biosynthesis. The polypeptide is Ubiquinone biosynthesis protein COQ4, mitochondrial (Paracoccidioides brasiliensis (strain Pb18)).